The primary structure comprises 157 residues: Arginine repressor (157 aa).

It belongs to the ArgR family.

The protein resides in the cytoplasm. It participates in amino-acid biosynthesis; L-arginine biosynthesis [regulation]. In terms of biological role, regulates arginine biosynthesis genes. This is Arginine repressor from Deinococcus radiodurans (strain ATCC 13939 / DSM 20539 / JCM 16871 / CCUG 27074 / LMG 4051 / NBRC 15346 / NCIMB 9279 / VKM B-1422 / R1).